A 289-amino-acid chain; its full sequence is Shikimate dehydrogenase (NADP(+)) (289 aa).

Shikimate is bound by residues 20–22 and Ser-67; that span reads SIS. Residue Lys-71 is the Proton acceptor of the active site. Residue Asp-83 coordinates NADP(+). Residues Asn-92 and Asp-107 each contribute to the shikimate site. NADP(+) contacts are provided by residues 132–136 and Val-230; that span reads GGGGA. Tyr-232 lines the shikimate pocket. Gly-253 serves as a coordination point for NADP(+).

The protein belongs to the shikimate dehydrogenase family. Homodimer.

It catalyses the reaction shikimate + NADP(+) = 3-dehydroshikimate + NADPH + H(+). It functions in the pathway metabolic intermediate biosynthesis; chorismate biosynthesis; chorismate from D-erythrose 4-phosphate and phosphoenolpyruvate: step 4/7. In terms of biological role, involved in the biosynthesis of the chorismate, which leads to the biosynthesis of aromatic amino acids. Catalyzes the reversible NADPH linked reduction of 3-dehydroshikimate (DHSA) to yield shikimate (SA). In Streptococcus suis (strain 98HAH33), this protein is Shikimate dehydrogenase (NADP(+)).